Consider the following 158-residue polypeptide: MQGRLSAWLVKHGLVHRSLGFDYQGIETLQIKPEDWHSIAVILYVYGYNYLRSQCAYDVEPGGLLASVYHLTRIESGVDQPEEVCIKVFVPRRNPRIPSVFWVWKSVDFQERESYDMLGIFYENHPRLKRILMPESWIGWPLRKDYIAPNFYEIQDAY.

Belongs to the complex I 30 kDa subunit family. NDH is composed of at least 16 different subunits, 5 of which are encoded in the nucleus.

Its subcellular location is the plastid. The protein resides in the chloroplast thylakoid membrane. The catalysed reaction is a plastoquinone + NADH + (n+1) H(+)(in) = a plastoquinol + NAD(+) + n H(+)(out). It carries out the reaction a plastoquinone + NADPH + (n+1) H(+)(in) = a plastoquinol + NADP(+) + n H(+)(out). Its function is as follows. NDH shuttles electrons from NAD(P)H:plastoquinone, via FMN and iron-sulfur (Fe-S) centers, to quinones in the photosynthetic chain and possibly in a chloroplast respiratory chain. The immediate electron acceptor for the enzyme in this species is believed to be plastoquinone. Couples the redox reaction to proton translocation, and thus conserves the redox energy in a proton gradient. The sequence is that of NAD(P)H-quinone oxidoreductase subunit J, chloroplastic from Fagopyrum esculentum subsp. ancestrale (Wild buckwheat).